The sequence spans 258 residues: Octanoyltransferase (258 aa).

The region spanning 42-226 (NVGTDTLLLL…AVVAALDGEL (185 aa)) is the BPL/LPL catalytic domain. Substrate is bound by residues 80–87 (RGGKITWH), 156–158 (AIG), and 169–171 (GFS). The active-site Acyl-thioester intermediate is the Cys-187.

The protein belongs to the LipB family.

The protein resides in the cytoplasm. The enzyme catalyses octanoyl-[ACP] + L-lysyl-[protein] = N(6)-octanoyl-L-lysyl-[protein] + holo-[ACP] + H(+). It functions in the pathway protein modification; protein lipoylation via endogenous pathway; protein N(6)-(lipoyl)lysine from octanoyl-[acyl-carrier-protein]: step 1/2. Its function is as follows. Catalyzes the transfer of endogenously produced octanoic acid from octanoyl-acyl-carrier-protein onto the lipoyl domains of lipoate-dependent enzymes. Lipoyl-ACP can also act as a substrate although octanoyl-ACP is likely to be the physiological substrate. The sequence is that of Octanoyltransferase from Rhodococcus jostii (strain RHA1).